A 129-amino-acid chain; its full sequence is MAKKTVAAKKRNVKVDAYGQAHIHSSFNNIIVSLANSEGQVISWSSAGKMGFRSSKKNTPYAAQMAAQDCAKVAYDLGLRKVKVFVKGPGNGRESAIRTIHGAGIEVTEIVDVTPLPHNGCRPPKKRRV.

The protein belongs to the universal ribosomal protein uS11 family. In terms of assembly, part of the 30S ribosomal subunit. Interacts with proteins S7 and S18. Binds to IF-3.

In terms of biological role, located on the platform of the 30S subunit, it bridges several disparate RNA helices of the 16S rRNA. Forms part of the Shine-Dalgarno cleft in the 70S ribosome. This Parabacteroides distasonis (strain ATCC 8503 / DSM 20701 / CIP 104284 / JCM 5825 / NCTC 11152) protein is Small ribosomal subunit protein uS11.